We begin with the raw amino-acid sequence, 787 residues long: MDASLEKIADPTLAEMGKNLKEAMRMLEKSPRRTEEENGKKPVSEDIPGPLQGSGQDMVSILQLVQNLMHGDEDEEPQSTRIQNIGEQGHMALLGHSLGAYISTLDKEKLRKLTTRILSDTTLWLRRIFRYENGCAYFHEEEREGLAKICRLAIHSRYEDFVVDGFNVLYNKKPVIYLSAAARPGLGQYLCNQLGLPFPCLCRVPCNTMFGSQHQMDVAFLEKLIKDDVERGRLPLLLVANAGTAAVGHTDKIGRLKELCEQYGIWLHVEGVNLATLALGYVSSSVLAATKCDSMTLTPGLWLGLPAVPAVTLYKHDDPALTLVAGLTSNKPADKLRALPLWLSLQYLGLDGIVERIKHACHLSQRLQESLKKVDHIKILVEDELSSPVVVFRFFQELPASDSAFKAVPVSNIAPAAVGRERHSCDALNRWLGEQLKQLVPQCGLTVIDLEVDGTCVRFSPLMTAEGLGTRGEDVDQLITCIQSKLPVLTCTLQLREEFKQEVEGTAGLLYVDDPNWPGIGVVRYEHANDDDTSLKSDPEGEKIHTGLLKKLNELESDLTFKIGPEYKSMKSCIYIGMASDDVDVSELVETIAVTAREIEENSRLLENMTEVVRKGIQEAQVQLQKANEERLLEEGVLRQIPVVGSVLNWFSPVQASQKGRSFNLTAGSLESTEYTYVHKVQGTGVTPPPTPLGTRSKQRLPGQKPFKRSLRGSDAVSETSSVSHIEDLEKVEQLSSGLEHDNLEAHSPEQPPRATDLTARQTEALQNQAQHQEDDHSQVEELERLR.

The span at 26 to 44 shows a compositional bias: basic and acidic residues; that stretch reads MLEKSPRRTEEENGKKPVS. Positions 26-52 are disordered; it reads MLEKSPRRTEEENGKKPVSEDIPGPLQ. S652 is modified (phosphoserine). The disordered stretch occupies residues 682–787; it reads QGTGVTPPPT…SQVEELERLR (106 aa). A phosphothreonine mark is found at T687 and T691. Residues S710, S718, S722, and S748 each carry the phosphoserine modification. A compositionally biased stretch (basic and acidic residues) spans 725-748; it reads HIEDLEKVEQLSSGLEHDNLEAHS. Polar residues predominate over residues 759 to 771; the sequence is TARQTEALQNQAQ. The span at 772–787 shows a compositional bias: basic and acidic residues; sequence HQEDDHSQVEELERLR. S778 is subject to Phosphoserine.

This sequence belongs to the group II decarboxylase family. Requires pyridoxal 5'-phosphate as cofactor.

The chain is Pyridoxal-dependent decarboxylase domain-containing protein 1 (Pdxdc1) from Mus musculus (Mouse).